A 1107-amino-acid polypeptide reads, in one-letter code: Polyphosphatidylinositol phosphatase INP53 (1107 aa).

One can recognise an SAC domain in the interval 142–482 (LKKLLSNGSF…GDQISQIYTG (341 aa)). Ser497 carries the phosphoserine modification. A disordered region spans residues 926–1107 (TASSVASSSP…LDSWQPLTPK (182 aa)). Residues 927–942 (ASSVASSSPVSSASAS) are compositionally biased toward low complexity. The span at 943–956 (LQPVRTQNSSQSRT) shows a compositional bias: polar residues. Phosphoserine is present on Ser986. 4 stretches are compositionally biased toward polar residues: residues 987–1005 (PTPQ…NIQE), 1020–1038 (FSQN…SPMS), 1045–1063 (NSAS…QTPT), and 1097–1107 (TLDSWQPLTPK). The residue at position 1035 (Ser1035) is a Phosphoserine. Thr1105 carries the phosphothreonine modification.

This sequence belongs to the synaptojanin family. In the central section; belongs to the inositol 1,4,5-trisphosphate 5-phosphatase family. Interacts (via SAC domain) with BSP1; the interaction is direct. Interacts with CHC1.

Its subcellular location is the cytoplasm. The catalysed reaction is a 1,2-diacyl-sn-glycero-3-phospho-(1D-myo-inositol-4,5-bisphosphate) + H2O = a 1,2-diacyl-sn-glycero-3-phospho-(1D-myo-inositol 4-phosphate) + phosphate. Functionally, dephosphorylates a number of phosphatidylinositols (PIs) like phosphatidylinositol 4,5-bisphosphate (PtdIns(4,5)P2), but also phosphatidylinositol 3-phosphate (PtdIns(3)P), phosphatidylinositol 4-phosphate (PtdIns(4)P), and phosphatidylinositol 3,5-bisphosphate (PtdIns(3,5)P2). Controls the cellular levels and subcellular distribution of phosphatidylinositol 3-phosphate and phosphatidylinositol 4,5-bisphosphate. Plays an essential role in a TGN (trans Golgi network)-to-early endosome pathway. Involved in clathrin-mediated protein sorting at the TGN. The polypeptide is Polyphosphatidylinositol phosphatase INP53 (INP53) (Saccharomyces cerevisiae (strain ATCC 204508 / S288c) (Baker's yeast)).